Consider the following 606-residue polypeptide: Sulfite reductase [NADPH] flavoprotein alpha-component (606 aa).

A Flavodoxin-like domain is found at 64–202 (VTLISASQTG…QAQQWRQQVV (139 aa)). FMN contacts are provided by residues 70–75 (SQTGNA), 117–120 (STQG), and 153–162 (LGDTSYEHFC). Residues 212-234 (QSTAPTQSTTPAAAAITSGGTTT) show a composition bias toward low complexity. The tract at residues 212-235 (QSTAPTQSTTPAAAAITSGGTTTV) is disordered. The FAD-binding FR-type domain maps to 241–455 (TAPLTAQLSV…IEHNDNFRLP (215 aa)). Residues T329, K363, 393–396 (RLYS), 411–413 (TVG), Y417, and 426–429 (GGAS) contribute to the FAD site. Residues 526-527 (SR), 532-536 (KIYVQ), and D568 each bind NADP(+). Y606 contributes to the FAD binding site.

The protein belongs to the NADPH-dependent sulphite reductase flavoprotein subunit CysJ family. In the N-terminal section; belongs to the flavodoxin family. This sequence in the C-terminal section; belongs to the flavoprotein pyridine nucleotide cytochrome reductase family. As to quaternary structure, alpha(8)-beta(8). The alpha component is a flavoprotein, the beta component is a hemoprotein. It depends on FAD as a cofactor. Requires FMN as cofactor.

The enzyme catalyses hydrogen sulfide + 3 NADP(+) + 3 H2O = sulfite + 3 NADPH + 4 H(+). It functions in the pathway sulfur metabolism; hydrogen sulfide biosynthesis; hydrogen sulfide from sulfite (NADPH route): step 1/1. Component of the sulfite reductase complex that catalyzes the 6-electron reduction of sulfite to sulfide. This is one of several activities required for the biosynthesis of L-cysteine from sulfate. The flavoprotein component catalyzes the electron flow from NADPH -&gt; FAD -&gt; FMN to the hemoprotein component. The polypeptide is Sulfite reductase [NADPH] flavoprotein alpha-component (Yersinia pestis bv. Antiqua (strain Antiqua)).